Here is a 120-residue protein sequence, read N- to C-terminus: Large ribosomal subunit protein uL22 (120 aa).

This sequence belongs to the universal ribosomal protein uL22 family. In terms of assembly, part of the 50S ribosomal subunit.

Functionally, this protein binds specifically to 23S rRNA; its binding is stimulated by other ribosomal proteins, e.g. L4, L17, and L20. It is important during the early stages of 50S assembly. It makes multiple contacts with different domains of the 23S rRNA in the assembled 50S subunit and ribosome. In terms of biological role, the globular domain of the protein is located near the polypeptide exit tunnel on the outside of the subunit, while an extended beta-hairpin is found that lines the wall of the exit tunnel in the center of the 70S ribosome. This is Large ribosomal subunit protein uL22 from Corynebacterium glutamicum (strain R).